Here is a 962-residue protein sequence, read N- to C-terminus: Glutamate receptor 1 (962 aa).

Positions 1-25 (MFSSFSFLNMFGVLFTVFNLTVVQP) are cleaved as a signal peptide. Residues 26–591 (YPSHIIIKSF…SVFSFMQPLS (566 aa)) are Extracellular-facing. N-linked (GlcNAc...) asparagine glycosylation is found at asparagine 190, asparagine 220, asparagine 275, asparagine 333, asparagine 441, and asparagine 482. Residues 592 to 612 (TEIWMYIIFAYIGVSVVIFLV) form a helical membrane-spanning segment. Residues 613–668 (SRFSPYEWRVEETSRGGFTISNDFSVYNCLWFTLAAFMQQGTDILPRSISGRIASS) are Cytoplasmic-facing. Residues 669-689 (AWWFFTMIIVSSYTANLAAFL) traverse the membrane as a helical segment. At 690–855 (TLEKMQAPIE…GSSASLNLSK (166 aa)) the chain is on the extracellular side. Asparagine 852 carries an N-linked (GlcNAc...) asparagine glycan. Residues 856 to 876 (VAGIFYILMGGMVISMLAALG) form a helical membrane-spanning segment. Residues 877–962 (EFLYRSRIEA…PANTLYNTAV (86 aa)) are Cytoplasmic-facing.

The protein belongs to the glutamate-gated ion channel (TC 1.A.10.1) family. As to quaternary structure, interacts with sol-1. Interacts with cni-1; the interaction negatively regulates export of glr-1 from the endoplasmic reticulum to synapses. Interacts with usp-46; the interaction results in deubiquitination of glr-1. Post-translationally, ubiquitinated. Deubiquitinated by usp-46 which prevents its degradation. In terms of processing, glycosylated. As to expression, command interneurons of the locomotory control circuit (AIB, AVA, AVB, AVD, AVE and PVC) and motor neurons (RMD, RIM, SMD, AVG, PVQ and URY).

The protein resides in the postsynaptic cell membrane. It localises to the endoplasmic reticulum. Its subcellular location is the synapse. The protein localises to the cell membrane. It is found in the recycling endosome. The protein resides in the cell projection. It localises to the dendrite. Its subcellular location is the perikaryon. Functionally, non-NMDA (N-methyl-D-aspartate) ionotropic glutamate receptor. L-glutamate acts as an excitatory neurotransmitter at many synapses in the central nervous system. The postsynaptic actions of glutamate are mediated by a variety of receptors that are named according to their selective agonists. May contribute to a sensory discrimination between mechanical and chemical stimuli. Plays a role in controlling movement in response to environmental cues such as food availability and mechanosensory stimulation such as the nose touch response. In AIB interneurons, promotes omega turns, a movement that frequently follows backwards locomotion or 'reversals' in response to environmental cues while possibly playing an inhibitory role in alternative neurons to inhibit omega turns. This Caenorhabditis elegans protein is Glutamate receptor 1.